Reading from the N-terminus, the 1042-residue chain is Protein phosphatase Slingshot homolog 1 (1042 aa).

The segment covering 1–12 (MALVTLQRSPTP) has biased composition (polar residues). Positions 1 to 29 (MALVTLQRSPTPSAASSSASNSELEAGSD) are disordered. A2 bears the N-acetylalanine mark. Residues 13 to 22 (SAASSSASNS) are compositionally biased toward low complexity. 2 positions are modified to phosphoserine: S37 and S57. The DEK-C domain occupies 249-304 (ERTERLIKAKLRSIMMSQDLENVTSKEIRNELEKQMNCNLKEFKEFIDNEMLLILG). The 142-residue stretch at 308–449 (KPSLIFDHLY…LSEYEGILDA (142 aa)) folds into the Tyrosine-protein phosphatase domain. C393 functions as the Phosphocysteine intermediate in the catalytic mechanism. The residue at position 516 (S516) is a Phosphoserine. Disordered stretches follow at residues 576–609 (FGNSKPRSDSLPQVEELEKDGSPRTGRWRRASTQ), 668–766 (MERH…PHCD), 858–900 (IPEE…LDHT), and 915–942 (PTSSSISSNLTRSSSSDSIHSVRGKPGL). The span at 675 to 693 (SSSAICTQPTFLPHVTSSP) shows a compositional bias: polar residues. The segment covering 697 to 712 (ASSRSRAPERPASGPA) has biased composition (low complexity). Residues 886-900 (LQKSPTSTLPRLDHT) are compositionally biased toward polar residues. A Phosphoserine modification is found at S889. The interval 889-1042 (SPTSTLPRLD…LKSPSRVNKS (154 aa)) is interaction with YWHAG. Low complexity predominate over residues 917-935 (SSSISSNLTRSSSSDSIHS). S970 carries the phosphoserine modification. Residues 985–995 (SSEADTSTIAD) show a composition bias toward polar residues. Positions 985 to 1042 (SSEADTSTIADSQDAKCGLSSSFLPEPQSAPRDPAATSKSSGKSAPEHLKSPSRVNKS) are disordered.

This sequence belongs to the protein-tyrosine phosphatase family. Interacts with the 14-3-3 proteins YWHAB, YWHAG, YWHAQ, and YWHAZ. Interaction with 14-3-3 proteins inhibits phosphatase activity and also blocks recruitment to lamellipodia and stimulation by actin. Interacts with actin and this stimulates phosphatase activity. Interacts with LIMK1. Phosphorylated. Inhibitory phosphorylation by PAK4 promotes binding to YWHAZ. Phosphorylation at Ser-970 is decreased by stimuli which promote actin reorganization and lamellipodia formation. Can be dephosphorylated and activated by PPP3CA/calcineurin A. Phosphorylation decreases immediately prior to telophase. In terms of tissue distribution, expressed in brain, heart, kidney and thymus. Also expressed at lower levels in liver, skeletal muscle, small intestine and spleen.

Its subcellular location is the cytoplasm. It localises to the cytoskeleton. The protein localises to the cleavage furrow. The protein resides in the midbody. The catalysed reaction is O-phospho-L-tyrosyl-[protein] + H2O = L-tyrosyl-[protein] + phosphate. It carries out the reaction O-phospho-L-seryl-[protein] + H2O = L-seryl-[protein] + phosphate. The enzyme catalyses O-phospho-L-threonyl-[protein] + H2O = L-threonyl-[protein] + phosphate. Its function is as follows. Protein phosphatase which regulates actin filament dynamics. Dephosphorylates and activates the actin binding/depolymerizing factor cofilin, which subsequently binds to actin filaments and stimulates their disassembly. Inhibitory phosphorylation of cofilin is mediated by LIMK1, which may also be dephosphorylated and inactivated by this protein. This chain is Protein phosphatase Slingshot homolog 1, found in Mus musculus (Mouse).